The following is a 70-amino-acid chain: Protein SlyX homolog (70 aa).

It belongs to the SlyX family.

The protein is Protein SlyX homolog of Shewanella sp. (strain MR-4).